A 303-amino-acid polypeptide reads, in one-letter code: 1D-myo-inositol 2-acetamido-2-deoxy-alpha-D-glucopyranoside deacetylase (303 aa).

Residues His-13, Asp-16, and His-147 each contribute to the Zn(2+) site.

Belongs to the MshB deacetylase family. It depends on Zn(2+) as a cofactor.

The enzyme catalyses 1D-myo-inositol 2-acetamido-2-deoxy-alpha-D-glucopyranoside + H2O = 1D-myo-inositol 2-amino-2-deoxy-alpha-D-glucopyranoside + acetate. Functionally, catalyzes the deacetylation of 1D-myo-inositol 2-acetamido-2-deoxy-alpha-D-glucopyranoside (GlcNAc-Ins) in the mycothiol biosynthesis pathway. This Mycobacterium tuberculosis (strain ATCC 25177 / H37Ra) protein is 1D-myo-inositol 2-acetamido-2-deoxy-alpha-D-glucopyranoside deacetylase.